Here is a 243-residue protein sequence, read N- to C-terminus: Adenylate dimethylallyltransferase (243 aa).

It catalyses the reaction dimethylallyl diphosphate + AMP = N(6)-(dimethylallyl)adenosine 5'-phosphate + diphosphate. Its function is as follows. Transfers dimethylallyl groups to AMP as part of the biosynthesis of cytokinin phytohormones. The protein is Adenylate dimethylallyltransferase (tzs) of Agrobacterium fabrum (strain C58 / ATCC 33970) (Agrobacterium tumefaciens (strain C58)).